A 274-amino-acid chain; its full sequence is Pantothenate synthetase (274 aa).

26-33 is an ATP binding site; the sequence is MGNLHAGH. His33 (proton donor) is an active-site residue. Gln57 is a binding site for (R)-pantoate. Gln57 is a beta-alanine binding site. 143–146 is an ATP binding site; sequence GKKD. Gln149 is a (R)-pantoate binding site. ATP is bound by residues Val172 and 180 to 183; that span reads LSSR.

Belongs to the pantothenate synthetase family. Homodimer.

It is found in the cytoplasm. It catalyses the reaction (R)-pantoate + beta-alanine + ATP = (R)-pantothenate + AMP + diphosphate + H(+). It functions in the pathway cofactor biosynthesis; (R)-pantothenate biosynthesis; (R)-pantothenate from (R)-pantoate and beta-alanine: step 1/1. Functionally, catalyzes the condensation of pantoate with beta-alanine in an ATP-dependent reaction via a pantoyl-adenylate intermediate. In Dechloromonas aromatica (strain RCB), this protein is Pantothenate synthetase.